The chain runs to 400 residues: MTMKISVWSLLIVIGYHLWMSPVLAGPLNFGYLSWGQHSILEQDSVQLISHQSLLPAGDNLISLHKSLVEIESLGGNEVNVSDFLKSYLESKGLTVELQRVSSNPTVRDNVYAYLGSQRNTKVVLTSHIDTVNPFLPYYIEGDKIHGRGSCDAKSSVAAQIFAMLELMSEGKVQEGDLSLLFVVGEEIDGIGMKTVANKLNADWEVAIFGEPTENKLGVGHKGNFRFDVYAHGKACHSGYPQEGFSAIEFLLRQCVKLMDTDLPKSKLLGPSTINIGTIEGGAAANILAAEAKAEVFIRVAEDIETIRDIAEDLFDTEHSEIKVIQYSPPQYLDYDIPGMDTVVLAYATDIPYLSDRKMKIYLFGPGSIREAHGPNEYVTFSQLFEGLNGYKRMVMYNLR.

A signal peptide spans 1-25; sequence MTMKISVWSLLIVIGYHLWMSPVLA. N-linked (GlcNAc...) asparagine glycosylation is present at Asn-80. Asp-152 is a binding site for Zn(2+). Glu-186 acts as the Proton acceptor in catalysis. Residue Glu-187 coordinates Zn(2+).

The protein belongs to the peptidase M20A family. It depends on Zn(2+) as a cofactor.

Its subcellular location is the secreted. The chain is Peptidase M20 domain-containing protein C757.05c from Schizosaccharomyces pombe (strain 972 / ATCC 24843) (Fission yeast).